The primary structure comprises 1000 residues: Probable coatomer subunit beta' (1000 aa).

WD repeat units lie at residues 13–52 (ARSDRVKCVDLHPVETWLLAALYNGNVHIWNYETQTLVKS), 55–94 (VCDVPVRAAKFVPRKSWVVTGSDDMHIRVFNYNTLERVHQ), 97–136 (AHSDYLRSLVVHPTLPYVISSSDDMLVKMWDWDNKWAMKQ), 140–180 (GHTH…PNFT), 183–224 (GHEK…CVQT), 227–266 (GHAQNVSSVCFHPELPLIITGSEDSTVRLWHANTYRLETT), and 351–391 (LGSS…NKDF). Positions 863-1000 (PRQTETQLKA…MDDLNLDEED (138 aa)) are disordered. Residues 901-915 (EPEEEEEQEEFDDDQ) are compositionally biased toward acidic residues. A compositionally biased stretch (low complexity) spans 960 to 969 (SASSQQSAQD). Positions 970–1000 (FQDDTQWSDEDFGDAENGDLNMDDLNLDEED) are enriched in acidic residues.

It belongs to the WD repeat COPB2 family. In terms of assembly, oligomeric complex that consists of at least the alpha, beta, beta', gamma, delta, epsilon and zeta subunits.

Its subcellular location is the cytoplasm. The protein resides in the golgi apparatus membrane. The protein localises to the cytoplasmic vesicle. It is found in the COPI-coated vesicle membrane. Its function is as follows. The coatomer is a cytosolic protein complex that binds to dilysine motifs and reversibly associates with Golgi non-clathrin-coated vesicles, which further mediate biosynthetic protein transport from the ER, via the Golgi up to the trans Golgi network. Coatomer complex is required for budding from Golgi membranes, and is essential for the retrograde Golgi-to-ER transport of dilysine-tagged proteins. This Caenorhabditis elegans protein is Probable coatomer subunit beta' (copb-2).